Consider the following 153-residue polypeptide: MEKINSLSTQLVKCCFCDFLKVKMHTVSYIHFFYLGLCLLTLTSSAAAGPETLCGAELVDALQFVCGDRGFYFSKPTGYGSSSRRLHHKGIVDECCFQSCDLRRLEMYCAPIKPPKSARSVRAQRHTDMPKAQKEVHLKNTSRGNTGNRNYRM.

Positions 49 to 77 (GPETLCGAELVDALQFVCGDRGFYFSKPT) are b. Cystine bridges form between Cys-54-Cys-96, Cys-66-Cys-109, and Cys-95-Cys-100. The segment at 78–89 (GYGSSSRRLHHK) is c. Residues 90-110 (GIVDECCFQSCDLRRLEMYCA) are a. A d region spans residues 111-118 (PIKPPKSA). A propeptide spans 119–153 (RSVRAQRHTDMPKAQKEVHLKNTSRGNTGNRNYRM) (e peptide). The tract at residues 119-153 (RSVRAQRHTDMPKAQKEVHLKNTSRGNTGNRNYRM) is disordered. Residues 125 to 138 (RHTDMPKAQKEVHL) are compositionally biased toward basic and acidic residues. Polar residues predominate over residues 139 to 153 (KNTSRGNTGNRNYRM).

Belongs to the insulin family. As to quaternary structure, forms a ternary complex with IGFR1 and ITGAV:ITGB3. Forms a ternary complex with IGFR1 and ITGA6:ITGB4. Forms a ternary complex with IGFBP3 and ALS.

The protein localises to the secreted. In terms of biological role, the insulin-like growth factors, isolated from plasma, are structurally and functionally related to insulin but have a much higher growth-promoting activity. Acts as a ligand for IGF1R. Binds to the alpha subunit of IGF1R, leading to the activation of the intrinsic tyrosine kinase activity which autophosphorylates tyrosine residues in the beta subunit thus initiatiating a cascade of down-stream signaling events leading to activation of the PI3K-AKT/PKB and the Ras-MAPK pathways. Binds to integrins. Its binding to integrins and subsequent ternary complex formation with integrins and IGFR1 are essential for IGF1 signaling. The sequence is that of Insulin-like growth factor 1 from Gallus gallus (Chicken).